Reading from the N-terminus, the 157-residue chain is Nascent polypeptide-associated complex subunit beta-1 (157 aa).

Disordered stretches follow at residues 19–42 (KVGG…KDDT) and 126–157 (EKHE…ADVE). The NAC-A/B domain occupies 38-103 (NKDDTKLQSQ…PQEKNLQDLF (66 aa)). The span at 126-142 (EKHEAKAPADAEKKDEA) shows a compositional bias: basic and acidic residues. The residue at position 151 (Thr-151) is a Phosphothreonine.

Belongs to the NAC-beta family. In terms of assembly, part of the nascent polypeptide-associated complex (NAC), consisting of EGD2 and either EGD1 or BTT1. NAC associates with ribosomes via EGD1 or BTT1, and with the CCR4-NOT complex.

Its subcellular location is the cytoplasm. It localises to the nucleus. In terms of biological role, component of the nascent polypeptide-associated complex (NAC), a dynamic component of the ribosomal exit tunnel, protecting the emerging polypeptides from interaction with other cytoplasmic proteins to ensure appropriate nascent protein targeting. The NAC complex also promotes mitochondrial protein import by enhancing productive ribosome interactions with the outer mitochondrial membrane and blocks the inappropriate interaction of ribosomes translating non-secretory nascent polypeptides with translocation sites in the membrane of the endoplasmic reticulum. EGD1 may act as a transcription factor that exert a negative effect on the expression of several genes that are transcribed by RNA polymerase II. The polypeptide is Nascent polypeptide-associated complex subunit beta-1 (EGD1) (Saccharomyces cerevisiae (strain YJM789) (Baker's yeast)).